A 151-amino-acid polypeptide reads, in one-letter code: C-C motif chemokine 25 (151 aa).

The N-terminal stretch at Met1 to Ala23 is a signal peptide. 2 disulfides stabilise this stretch: Cys30–Cys58 and Cys31–Cys75. The segment at Arg93–Pro151 is disordered.

The protein belongs to the intercrine beta (chemokine CC) family.

It localises to the secreted. Its function is as follows. Potentially involved in T-cell development. Recombinant protein shows chemotactic activity on thymocytes, macrophages, THP-1 cells, and dendritics cells but is inactive on peripheral blood lymphocytes and neutrophils. Binds to CCR9. Binds to atypical chemokine receptor ACKR4 and mediates the recruitment of beta-arrestin (ARRB1/2) to ACKR4. This is C-C motif chemokine 25 (CCL25) from Sus scrofa (Pig).